A 545-amino-acid chain; its full sequence is CWF19-like protein 1 homolog (545 aa).

Positions 306 to 329 (YFYDMDGGRRKRQGGDNNKRDKRP) are disordered.

Belongs to the CWF19 family.

The protein is CWF19-like protein 1 homolog of Drosophila melanogaster (Fruit fly).